The sequence spans 339 residues: D-erythrose-4-phosphate dehydrogenase (339 aa).

11–12 (RI) contributes to the NAD(+) binding site. Substrate is bound by residues 158–160 (SCT), arginine 204, 217–218 (TK), and arginine 240. The Nucleophile role is filled by cysteine 159. Asparagine 322 provides a ligand contact to NAD(+).

This sequence belongs to the glyceraldehyde-3-phosphate dehydrogenase family. Epd subfamily. As to quaternary structure, homotetramer.

It is found in the cytoplasm. The enzyme catalyses D-erythrose 4-phosphate + NAD(+) + H2O = 4-phospho-D-erythronate + NADH + 2 H(+). Its pathway is cofactor biosynthesis; pyridoxine 5'-phosphate biosynthesis; pyridoxine 5'-phosphate from D-erythrose 4-phosphate: step 1/5. Functionally, catalyzes the NAD-dependent conversion of D-erythrose 4-phosphate to 4-phosphoerythronate. The sequence is that of D-erythrose-4-phosphate dehydrogenase from Aliivibrio fischeri (strain ATCC 700601 / ES114) (Vibrio fischeri).